The primary structure comprises 197 residues: Lactoylglutathione lyase-like protein terB (197 aa).

The first 19 residues, 1–19 (MARFAVLQLLLPLAAGLTG), serve as a signal peptide directing secretion. N-linked (GlcNAc...) asparagine glycosylation is found at asparagine 82, asparagine 99, and asparagine 140.

This sequence belongs to the glyoxalase I family.

Functionally, lactoylglutathione lyase-like protein; part of the gene cluster that mediates the biosynthesis of terrein, a fungal metabolite with ecological, antimicrobial, antiproliferative, and antioxidative activities. The first step in the pathway is performed by the polyketide synthase terA that produces 4-hydroxy-6-methylpyranon (4-HMP), orsellinic acid (OA), and 2,3-dehydro-6-hydroxymellein (2,3-dehydro-6-HM) by condensing acetyl-CoA with two, three, or four malonyl-CoA units, respectively. 4-HMP and OA are not pathway intermediates, but are rather shunt or side products. 2,3-dehydro-6-HM is further converted to 6-hydroxymellein (6-HM) by the 6-hydroxymellein synthase terB. The monooxygenases terC and terD, the multicopper oxidase terE and the Kelch-like protein terF are then involved in the transformation of 6-HM to terrein. Even if they are co-regulated with the other terrein cluster genes, terH and terI seem to be dispensable for terrein production; whereas one or both of the 2 transporters terG and terJ are probably required for efficient secretion of metabolites. The sequence is that of Lactoylglutathione lyase-like protein terB from Aspergillus terreus (strain NIH 2624 / FGSC A1156).